Consider the following 165-residue polypeptide: Fibrinogen-binding protein (165 aa).

Positions 1–29 are cleaved as a signal peptide; that stretch reads MKNKLIAKSLLAIAAIGITTTTIASTADA.

In terms of assembly, interacts with host fibrinogen alpha chain/FGA. Interacts with host complement protein C3.

The protein resides in the secreted. In terms of biological role, extracellular fibrinogen-binding protein that plays an important role in virulence. By interacting with the alpha chain of fibrinogen and its derivative fibrin, enhances a non-functional interaction between fibrinogen and platelets and is responsible for repression of fibrinogen-dependent platelet aggregation. In addition, assembles a fibrinogen protective shield around the bacteria which results in impaired phagocytic clearance by the host. Mechanistically, interacts with host complement C3b deposited on the surface of the bacterium via its C-terminal and then recruits fibrinogen via its N-terminal. The sequence is that of Fibrinogen-binding protein (fib) from Staphylococcus aureus (strain MRSA252).